Here is a 191-residue protein sequence, read N- to C-terminus: Protein adenylyltransferase NmFic (191 aa).

The 126-residue stretch at 37-162 folds into the Fido domain; the sequence is GTTAGLQQIH…NDLELRFLLK (126 aa). Residues Lys67, 104–107, 112–118, and 140–143 each bind ATP; these read NIAH, GNGRSTR, and KTLY. Positions 182-187 match the Inhibitory (S/T)XXXE(G/N) motif motif; it reads SYYYEG. Tyr183 carries the post-translational modification O-AMP-tyrosine; in vitro. Glu186 contacts ATP.

In terms of assembly, homodimer. Post-translationally, auto-AMPylation at Tyr-183 in vitro.

It carries out the reaction L-tyrosyl-[protein] + ATP = O-(5'-adenylyl)-L-tyrosyl-[protein] + diphosphate. The enzyme catalyses L-threonyl-[protein] + ATP = 3-O-(5'-adenylyl)-L-threonyl-[protein] + diphosphate. Its activity is regulated as follows. Adenylyltransferase activity is inhibited by the inhibitory helix present at the C-terminus: Glu-186 binds ATP and competes with ATP-binding at Arg-118, thereby preventing adenylyltransferase activity. Activation dissociates ATP-binding from Glu-186, allowing ordered binding of the entire ATP moiety with the alpha-phosphate in an orientation that is productive for accepting an incoming target hydroxyl side chain. Functionally, adenylyltransferase that mediates the addition of adenosine 5'-monophosphate (AMP) to specific residues of target proteins. The protein is Protein adenylyltransferase NmFic of Neisseria meningitidis serogroup B (strain ATCC BAA-335 / MC58).